The primary structure comprises 267 residues: Indole-3-glycerol phosphate synthase (267 aa).

The protein belongs to the TrpC family.

The catalysed reaction is 1-(2-carboxyphenylamino)-1-deoxy-D-ribulose 5-phosphate + H(+) = (1S,2R)-1-C-(indol-3-yl)glycerol 3-phosphate + CO2 + H2O. The protein operates within amino-acid biosynthesis; L-tryptophan biosynthesis; L-tryptophan from chorismate: step 4/5. The chain is Indole-3-glycerol phosphate synthase from Cupriavidus pinatubonensis (strain JMP 134 / LMG 1197) (Cupriavidus necator (strain JMP 134)).